The following is a 193-amino-acid chain: Potassium-transporting ATPase KdpC subunit (193 aa).

A helical membrane pass occupies residues 11 to 31 (FTLVFMVLLGLVYPFVMTGIA).

It belongs to the KdpC family. As to quaternary structure, the system is composed of three essential subunits: KdpA, KdpB and KdpC.

It is found in the cell membrane. In terms of biological role, part of the high-affinity ATP-driven potassium transport (or Kdp) system, which catalyzes the hydrolysis of ATP coupled with the electrogenic transport of potassium into the cytoplasm. This subunit acts as a catalytic chaperone that increases the ATP-binding affinity of the ATP-hydrolyzing subunit KdpB by the formation of a transient KdpB/KdpC/ATP ternary complex. This Caldanaerobacter subterraneus subsp. tengcongensis (strain DSM 15242 / JCM 11007 / NBRC 100824 / MB4) (Thermoanaerobacter tengcongensis) protein is Potassium-transporting ATPase KdpC subunit.